Reading from the N-terminus, the 214-residue chain is MSDTQHSCVIIGIAGASASGKSLIAQTIYEELVAELGAGQIGVITEDCYYRDQTHLTMEERVKTNYDHPNALDHDLLVQHLSQLVQGDAVNIPQYSYTEHTRMSEVTPFAPRRVIILEGILLLTDSRLRDLMDASIFMDTPLDICLLRRLVRDVQERGRTMDSVLKQYQKTVRPMFLQFIEPSKQYADVIVPRGGKNRIAIDMLKARIRHMLIG.

An ATP-binding site is contributed by 15-22; sequence GASASGKS.

It belongs to the uridine kinase family.

Its subcellular location is the cytoplasm. It carries out the reaction uridine + ATP = UMP + ADP + H(+). It catalyses the reaction cytidine + ATP = CMP + ADP + H(+). It participates in pyrimidine metabolism; CTP biosynthesis via salvage pathway; CTP from cytidine: step 1/3. Its pathway is pyrimidine metabolism; UMP biosynthesis via salvage pathway; UMP from uridine: step 1/1. In Aeromonas hydrophila subsp. hydrophila (strain ATCC 7966 / DSM 30187 / BCRC 13018 / CCUG 14551 / JCM 1027 / KCTC 2358 / NCIMB 9240 / NCTC 8049), this protein is Uridine kinase.